The sequence spans 386 residues: 8-amino-7-oxononanoate synthase (386 aa).

R26 is a substrate binding site. 104–105 provides a ligand contact to pyridoxal 5'-phosphate; the sequence is GY. Substrate is bound at residue H129. S176, H204, and T232 together coordinate pyridoxal 5'-phosphate. K235 carries the N6-(pyridoxal phosphate)lysine modification. T349 contacts substrate.

The protein belongs to the class-II pyridoxal-phosphate-dependent aminotransferase family. BioF subfamily. As to quaternary structure, homodimer. Pyridoxal 5'-phosphate serves as cofactor.

It catalyses the reaction 6-carboxyhexanoyl-[ACP] + L-alanine + H(+) = (8S)-8-amino-7-oxononanoate + holo-[ACP] + CO2. It participates in cofactor biosynthesis; biotin biosynthesis. Functionally, catalyzes the decarboxylative condensation of pimeloyl-[acyl-carrier protein] and L-alanine to produce 8-amino-7-oxononanoate (AON), [acyl-carrier protein], and carbon dioxide. The protein is 8-amino-7-oxononanoate synthase of Chromohalobacter salexigens (strain ATCC BAA-138 / DSM 3043 / CIP 106854 / NCIMB 13768 / 1H11).